A 275-amino-acid chain; its full sequence is Elongation factor Ts (275 aa).

The segment at 76-79 is involved in Mg(2+) ion dislocation from EF-Tu; the sequence is TDFV.

This sequence belongs to the EF-Ts family.

The protein localises to the cytoplasm. Functionally, associates with the EF-Tu.GDP complex and induces the exchange of GDP to GTP. It remains bound to the aminoacyl-tRNA.EF-Tu.GTP complex up to the GTP hydrolysis stage on the ribosome. This Rhodococcus jostii (strain RHA1) protein is Elongation factor Ts.